The primary structure comprises 141 residues: Large ribosomal subunit protein uL11 (141 aa).

Belongs to the universal ribosomal protein uL11 family. Part of the ribosomal stalk of the 50S ribosomal subunit. Interacts with L10 and the large rRNA to form the base of the stalk. L10 forms an elongated spine to which L12 dimers bind in a sequential fashion forming a multimeric L10(L12)X complex. One or more lysine residues are methylated.

Its function is as follows. Forms part of the ribosomal stalk which helps the ribosome interact with GTP-bound translation factors. In Helicobacter hepaticus (strain ATCC 51449 / 3B1), this protein is Large ribosomal subunit protein uL11.